The sequence spans 795 residues: Phenylalanine--tRNA ligase beta subunit (795 aa).

Residues 39-148 enclose the tRNA-binding domain; that stretch reads AAEFNGVVIG…LDAPLGTDLR (110 aa). The 76-residue stretch at 401-476 folds into the B5 domain; it reads PKPAQILLRR…RIYGYNNIPN (76 aa). Mg(2+) is bound by residues aspartate 454, aspartate 460, glutamate 463, and glutamate 464. Positions 701-794 constitute an FDX-ACB domain; it reads SKFPANRRDI…LKTEFNASLR (94 aa).

It belongs to the phenylalanyl-tRNA synthetase beta subunit family. Type 1 subfamily. In terms of assembly, tetramer of two alpha and two beta subunits. It depends on Mg(2+) as a cofactor.

It is found in the cytoplasm. It carries out the reaction tRNA(Phe) + L-phenylalanine + ATP = L-phenylalanyl-tRNA(Phe) + AMP + diphosphate + H(+). This is Phenylalanine--tRNA ligase beta subunit from Shewanella oneidensis (strain ATCC 700550 / JCM 31522 / CIP 106686 / LMG 19005 / NCIMB 14063 / MR-1).